A 69-amino-acid polypeptide reads, in one-letter code: U2-agatoxin-Ao1i (69 aa).

The first 20 residues, 1–20 (MKAIISLLLISAMVFSMIEA), serve as a signal peptide directing secretion. A propeptide spanning residues 21–34 (VPVXXGLQLFESER) is cleaved from the precursor. Disulfide bonds link cysteine 36-cysteine 52, cysteine 43-cysteine 57, and cysteine 51-cysteine 67. Leucine 68 bears the Leucine amide mark.

It belongs to the neurotoxin 01 (U2-agtx) family. As to expression, expressed by the venom gland.

It localises to the secreted. In terms of biological role, insect active toxin causing rapid but reversible paralysis in crickets. No activity shown in mammals. Does not show effect on mammalian voltage-gated calcium channels. The polypeptide is U2-agatoxin-Ao1i (Agelena orientalis (Funnel-web spider)).